We begin with the raw amino-acid sequence, 129 residues long: MFILGSVGCVEADEASPLYCLSAALIRLSNDEMGGNVMWFIALLFALLIARCTCHTKNTHPDFSKPTFCHQHAALTNSLSSLYRCFVPDGTAMLPTATKKTPQRRKNGAIIHRVVIYHGRESANGISKQ.

A helical membrane pass occupies residues 33–50; the sequence is MGGNVMWFIALLFALLIA.

Its subcellular location is the membrane. This is an uncharacterized protein from Saccharomyces cerevisiae (strain ATCC 204508 / S288c) (Baker's yeast).